Consider the following 398-residue polypeptide: CCA-adding enzyme (398 aa).

Residues G32 and R35 each contribute to the ATP site. CTP is bound by residues G32 and R35. D45 and D47 together coordinate Mg(2+). ATP is bound by residues R116, D159, R162, R165, and R168. Residues R116, D159, R162, R165, and R168 each coordinate CTP.

It belongs to the tRNA nucleotidyltransferase/poly(A) polymerase family. Bacterial CCA-adding enzyme type 3 subfamily. In terms of assembly, homodimer. Requires Mg(2+) as cofactor.

It catalyses the reaction a tRNA precursor + 2 CTP + ATP = a tRNA with a 3' CCA end + 3 diphosphate. It carries out the reaction a tRNA with a 3' CCA end + 2 CTP + ATP = a tRNA with a 3' CCACCA end + 3 diphosphate. Functionally, catalyzes the addition and repair of the essential 3'-terminal CCA sequence in tRNAs without using a nucleic acid template. Adds these three nucleotides in the order of C, C, and A to the tRNA nucleotide-73, using CTP and ATP as substrates and producing inorganic pyrophosphate. tRNA 3'-terminal CCA addition is required both for tRNA processing and repair. Also involved in tRNA surveillance by mediating tandem CCA addition to generate a CCACCA at the 3' terminus of unstable tRNAs. While stable tRNAs receive only 3'-terminal CCA, unstable tRNAs are marked with CCACCA and rapidly degraded. This chain is CCA-adding enzyme, found in Lactobacillus gasseri (strain ATCC 33323 / DSM 20243 / BCRC 14619 / CIP 102991 / JCM 1131 / KCTC 3163 / NCIMB 11718 / NCTC 13722 / AM63).